The following is a 465-amino-acid chain: Cysteine--tRNA ligase (465 aa).

Cys30 lines the Zn(2+) pocket. The 'HIGH' region motif lies at 32–42 (MTVYDYCHVGH). The Zn(2+) site is built by Cys214, His239, and Glu243. The short motif at 271 to 275 (KMSKS) is the 'KMSKS' region element. Lys274 provides a ligand contact to ATP.

Belongs to the class-I aminoacyl-tRNA synthetase family. Monomer. Zn(2+) is required as a cofactor.

The protein resides in the cytoplasm. It carries out the reaction tRNA(Cys) + L-cysteine + ATP = L-cysteinyl-tRNA(Cys) + AMP + diphosphate. This Paraburkholderia xenovorans (strain LB400) protein is Cysteine--tRNA ligase.